The chain runs to 434 residues: E3 ubiquitin-protein ligase siah-1 (434 aa).

Residues 27-88 (FEEDENAGPE…NGNTPSVTIP (62 aa)) are disordered. Residues 43–55 (SSSSASSQRSSAS) are compositionally biased toward low complexity. Residues 74–88 (MSNNQNGNTPSVTIP) are compositionally biased toward polar residues. The RING-type; degenerate zinc finger occupies 171–206 (CPVCLEYMLPPYMQCPSGHLVCSNCRPKLQCCPTCR). The segment at 220–415 (IANTVRFPCK…LGINVTISRI (196 aa)) is SBD. The SIAH-type; degenerate zinc-finger motif lies at 223 to 283 (TVRFPCKFSN…VMDHLKKVHK (61 aa)). Zn(2+) contacts are provided by Cys228, Cys235, His247, Cys251, Cys258, Cys265, His277, and His282.

The protein belongs to the SINA (Seven in absentia) family. In terms of assembly, interacts with tir-1.

It catalyses the reaction S-ubiquitinyl-[E2 ubiquitin-conjugating enzyme]-L-cysteine + [acceptor protein]-L-lysine = [E2 ubiquitin-conjugating enzyme]-L-cysteine + N(6)-ubiquitinyl-[acceptor protein]-L-lysine.. It functions in the pathway protein modification; protein ubiquitination. In terms of biological role, E3 ubiquitin-protein ligase that mediates ubiquitination and subsequent proteasomal degradation of target proteins. E3 ubiquitin ligases accept ubiquitin from an E2 ubiquitin-conjugating enzyme in the form of a thioester and then directly transfers the ubiquitin to targeted substrates. It probably triggers the ubiquitin-mediated degradation of different substrates. This is E3 ubiquitin-protein ligase siah-1 from Caenorhabditis briggsae.